Consider the following 127-residue polypeptide: UPF0389 protein GA21628 (127 aa).

The helical transmembrane segment at Ile69–Tyr88 threads the bilayer.

It belongs to the UPF0389 family.

The protein resides in the membrane. This Drosophila pseudoobscura pseudoobscura (Fruit fly) protein is UPF0389 protein GA21628.